The following is a 248-amino-acid chain: Metallo-beta-lactamase type 2 (248 aa).

An N-terminal signal peptide occupies residues 1 to 21 (MKGLKGLLVLALGFTGLQVFG). Positions 97, 99, 101, 160, and 179 each coordinate Zn(2+). K182 is a substrate binding site. Zn(2+) is bound at residue H221.

Belongs to the metallo-beta-lactamase superfamily. Class-B beta-lactamase family. In terms of assembly, monomer. Zn(2+) is required as a cofactor.

It is found in the periplasm. The enzyme catalyses a beta-lactam + H2O = a substituted beta-amino acid. Confers resistance to the different beta-lactams antibiotics (penicillin, cephalosporin and carbapenem) via the hydrolysis of the beta-lactam ring. This is Metallo-beta-lactamase type 2 (blaB8) from Elizabethkingia meningoseptica (Chryseobacterium meningosepticum).